The following is a 90-amino-acid chain: c-Myc-binding protein homolog (90 aa).

It belongs to the AMY1 family.

It localises to the nucleus. In Dictyostelium discoideum (Social amoeba), this protein is c-Myc-binding protein homolog (mycbp).